Consider the following 360-residue polypeptide: Peptide chain release factor 1 (360 aa).

N5-methylglutamine is present on glutamine 235. Residues 284–312 (AKRQQAEASTRRNLLGSGDRSDRNRTYNF) are disordered.

The protein belongs to the prokaryotic/mitochondrial release factor family. Post-translationally, methylated by PrmC. Methylation increases the termination efficiency of RF1.

The protein resides in the cytoplasm. Its function is as follows. Peptide chain release factor 1 directs the termination of translation in response to the peptide chain termination codons UAG and UAA. The protein is Peptide chain release factor 1 of Escherichia coli O81 (strain ED1a).